Reading from the N-terminus, the 417-residue chain is Gamma-glutamyl phosphate reductase (417 aa).

Belongs to the gamma-glutamyl phosphate reductase family.

It localises to the cytoplasm. It catalyses the reaction L-glutamate 5-semialdehyde + phosphate + NADP(+) = L-glutamyl 5-phosphate + NADPH + H(+). Its pathway is amino-acid biosynthesis; L-proline biosynthesis; L-glutamate 5-semialdehyde from L-glutamate: step 2/2. Catalyzes the NADPH-dependent reduction of L-glutamate 5-phosphate into L-glutamate 5-semialdehyde and phosphate. The product spontaneously undergoes cyclization to form 1-pyrroline-5-carboxylate. This Legionella pneumophila (strain Corby) protein is Gamma-glutamyl phosphate reductase.